Here is a 236-residue protein sequence, read N- to C-terminus: Protein YIPF6 (236 aa).

Alanine 2 is modified (N-acetylalanine). Over 2 to 84 (AEAVESPGDP…HVLYPRKSNT (83 aa)) the chain is Cytoplasmic. Serine 7 carries the phosphoserine modification. The helical transmembrane segment at 85–105 (LLRDWDLWGPLILCVTLALML) threads the bilayer. Over 106–115 (QRGSVDSEKD) the chain is Lumenal. Residues 116–136 (GGPQFAEVFVIVWFGAVTITL) form a helical membrane-spanning segment. Over 137–146 (NSKLLGGNIS) the chain is Cytoplasmic. Residues 147 to 167 (FFQSLCVLGYCILPLTMAMLV) traverse the membrane as a helical segment. Over 168–184 (CRLVLLAEPGPVNFMVR) the chain is Lumenal. Residues 185–205 (LFVVIIMFAWSIVASTAFLAD) form a helical membrane-spanning segment. Residues 206-212 (SQPPNRK) lie on the Cytoplasmic side of the membrane. The chain crosses the membrane as a helical span at residues 213 to 233 (ALAVYPVFLFYFVISWMILTF). The Lumenal segment spans residues 234-236 (TPQ).

It belongs to the YIP1 family. Predominantly interacts with YIPF1 or YIPF2, but may also form a ternary complex with YIPF1 and YIPF2. This interaction may stabilize YIPF1 and YIPF2.

It localises to the golgi apparatus membrane. Functionally, may be required for stable YIPF1 and YIPF2 protein expression. This is Protein YIPF6 (YIPF6) from Bos taurus (Bovine).